We begin with the raw amino-acid sequence, 611 residues long: Putative type II restriction enzyme HgiDII (611 aa).

Residues 355–364 (YPSNPKKEEV) are compositionally biased toward basic and acidic residues. The tract at residues 355–434 (YPSNPKKEEV…PEPSPPPKQE (80 aa)) is disordered. Low complexity predominate over residues 381–409 (TNASSDSSTATENASSDSSTATENASSET). 2 repeat units span residues 382-392 (NASSDSSTATE) and 393-403 (NASSDSSTATE). Residues 382-403 (NASSDSSTATENASSDSSTATE) are 2.5 X 11 AA tandem repeats. Residues 404–409 (NASSET) form a 3; truncated repeat. Acidic residues predominate over residues 410–425 (NDGEVEDNSFFDDDIP).

It catalyses the reaction Endonucleolytic cleavage of DNA to give specific double-stranded fragments with terminal 5'-phosphates.. Its function is as follows. According to REBASE this is a P subtype restriction enzyme that recognizes the double-stranded sequence 5'-GTCGAC-3' and cleaves after G-1. No restriction activity was detected upon overexpressing this protein in E.coli. This is Putative type II restriction enzyme HgiDII from Herpetosiphon aurantiacus (Herpetosiphon giganteus).